We begin with the raw amino-acid sequence, 401 residues long: 8-amino-7-oxononanoate synthase (401 aa).

Substrate is bound at residue R24. Position 111-112 (111-112 (GF)) interacts with pyridoxal 5'-phosphate. H137 serves as a coordination point for substrate. Residues S183, H211, and T240 each contribute to the pyridoxal 5'-phosphate site. K243 carries the N6-(pyridoxal phosphate)lysine modification. T357 provides a ligand contact to substrate.

Belongs to the class-II pyridoxal-phosphate-dependent aminotransferase family. BioF subfamily. As to quaternary structure, homodimer. It depends on pyridoxal 5'-phosphate as a cofactor.

It carries out the reaction 6-carboxyhexanoyl-[ACP] + L-alanine + H(+) = (8S)-8-amino-7-oxononanoate + holo-[ACP] + CO2. It functions in the pathway cofactor biosynthesis; biotin biosynthesis. Functionally, catalyzes the decarboxylative condensation of pimeloyl-[acyl-carrier protein] and L-alanine to produce 8-amino-7-oxononanoate (AON), [acyl-carrier protein], and carbon dioxide. The protein is 8-amino-7-oxononanoate synthase of Xylella fastidiosa (strain M23).